The chain runs to 533 residues: Probable metalloreductase AIM14 (533 aa).

The next 7 membrane-spanning stretches (helical) occupy residues 17–37, 61–81, 102–122, 136–156, 168–188, 198–218, and 220–240; these read IPYGYYTATVSLIFIILLIGA, GGSPLLYLVVLFVALLVPFVH, VLATLNLFLTLRPNFLLPGYV, SLCLLALVHGVGFLVKWALDS, IPNLAGLVVGALMAFMVLLSV, SFYLTHIIGAWVFVFLTAYHA, and PGVFVPYTLLNAGLFVFYILS. Positions 96–213 constitute a Ferric oxidoreductase domain; the sequence is LGRLSYVLAT…IIGAWVFVFL (118 aa). Residues 240-366 form the FAD-binding FR-type domain; the sequence is SKTVPARGVE…GGSGLSYALP (127 aa).

It belongs to the ferric reductase (FRE) family. AIM14 subfamily.

The protein resides in the membrane. Functionally, probable cell surface metalloreductase. May be involved in iron or copper homeostasis. The polypeptide is Probable metalloreductase AIM14 (AIM14) (Lachancea thermotolerans (strain ATCC 56472 / CBS 6340 / NRRL Y-8284) (Yeast)).